Reading from the N-terminus, the 523-residue chain is UDP-glucuronosyltransferase 3A1 (523 aa).

Positions 1 to 23 are cleaved as a signal peptide; it reads MAVGRKSLILSLLIQHFVLLHGA. Residues 24 to 483 are Extracellular-facing; the sequence is KILTVCFLGG…YSYQQPLYQQ (460 aa). An N-linked (GlcNAc...) asparagine glycan is attached at N125. Residues 484–504 form a helical membrane-spanning segment; it reads YLLDVFLFVCVCVIGACYLTV. Residues 505 to 523 lie on the Cytoplasmic side of the membrane; it reads KLLKMFIQKLCSFRKLKQN.

The protein belongs to the UDP-glycosyltransferase family.

Its subcellular location is the membrane. The enzyme catalyses glucuronate acceptor + UDP-alpha-D-glucuronate = acceptor beta-D-glucuronoside + UDP + H(+). Functionally, UDP-glucuronosyltransferases catalyze phase II biotransformation reactions in which lipophilic substrates are conjugated with glucuronic acid to increase water solubility and enhance excretion. They are of major importance in the conjugation and subsequent elimination of potentially toxic xenobiotics and endogenous compounds. This Xenopus laevis (African clawed frog) protein is UDP-glucuronosyltransferase 3A1 (ugt3a1).